A 248-amino-acid polypeptide reads, in one-letter code: Gamma-glutamyl peptidase 2 (248 aa).

Residues 17–212 (SEFVKEMYGG…IDRVHKIKFV (196 aa)) enclose the Glutamine amidotransferase type-1 domain. Catalysis depends on C101, which acts as the Nucleophile. Catalysis depends on residues H191 and E193.

The protein belongs to the peptidase C26 family.

It is found in the cytoplasm. The protein resides in the cytosol. It carries out the reaction an S-[(1E)-1-(hydroxyimino)-omega-(methylsulfanyl)alkyl]-L-glutathione + H2O = an S-[(1E)-1-(hydroxyimino)-omega-(methylsulfanyl)alkyl]-L-cysteinylglycine + L-glutamate. It catalyses the reaction (E)-1-(glutathione-S-yl)-2-(1H-indol-3-yl)acetohydroximate + H2O = (E)-1-(glycyl-L-cystein-S-yl)-2-(1H-indol-3-yl)acetohydroximate + L-glutamate. The catalysed reaction is 2-(glutathion-S-yl)-2-(1H-indol-3-yl)acetonitrile + H2O = 2-(glycyl-L-cystein-S-yl)-2-(1H-indol-3-yl)acetonitrile + L-glutamate. The enzyme catalyses (Z)-1-(glutathione-S-yl)-2-phenylacetohydroximate + H2O = (Z)-1-(glycyl-L-cystein-S-yl)-2-phenylacetohydroximate + L-glutamate. It participates in secondary metabolite biosynthesis. Its function is as follows. Involved in glucosinolate biosynthesis. Hydrolyzes the gamma-glutamyl peptide bond of several glutathione (GSH) conjugates to produce Cys-Gly conjugates related to glucosinolates. The gamma-Glu-Cys-Gly-GSH conjugates are the sulfur-donating molecule in glucosinolate biosynthesis. The sequence is that of Gamma-glutamyl peptidase 2 from Arabidopsis thaliana (Mouse-ear cress).